Here is a 549-residue protein sequence, read N- to C-terminus: MTNVVVSGEQLQEAFREVAAIVDSTVAITAGPRGKTVGINKPYGAPEITKDGYKVMKGIKPEKPLNAAIASIFAQSCSQCNDKVGDGTTTCSILTSNMIMEASKSIAAGNDRVGIKNGIQKAKDVILKEIASMSRTISLEKIDEVAQVAIISANGDKDIGNSIADSVKKVGKEGVITVEESKGSKELEVELTTGMQFDRGYLSPYFITNNEKMIVELDNPYLLITEKKLNIIQPLLPVLEAIVKSGKPLVIIAEDIEGEALSTLVINKLRGGLKVAAVKAPGFGDRRKEMLEDIATLTGAKYVIKDELGIKMEDLTLDDLGTAKNVKITKDNTTVVSENSDSDSVKARIEQIKSQIETSTSDYDKEKLRERLAKLSGGVAVLKVGGATEVEVKERRDRVEDALHATRAAIEEGIVPGGGVALLYASSVLDKLKGASDEEQIGINIIKKVLSAPIRRLVKNAGLESAVIIDYLIKQNDKELIYNVEAMNYANAFTAGVIDPAKVVRIAFETAVSVASVLITTESMIVDVPSKENASSPMGAGEMSGMGGF.

ATP-binding positions include Thr29 to Pro32, Lys50, Asp86 to Thr90, Gly418, and Asp499.

It belongs to the chaperonin (HSP60) family. In terms of assembly, forms a cylinder of 14 subunits composed of two heptameric rings stacked back-to-back. Interacts with the co-chaperonin GroES.

Its subcellular location is the cytoplasm. It carries out the reaction ATP + H2O + a folded polypeptide = ADP + phosphate + an unfolded polypeptide.. Functionally, together with its co-chaperonin GroES, plays an essential role in assisting protein folding. The GroEL-GroES system forms a nano-cage that allows encapsulation of the non-native substrate proteins and provides a physical environment optimized to promote and accelerate protein folding. The polypeptide is Chaperonin GroEL (Wolbachia sp. subsp. Drosophila simulans (strain wRi)).